The chain runs to 198 residues: Cytochrome c oxidase subunit 2 (198 aa).

Residues 1 to 13 (AICSLVLYLLTLM) traverse the membrane as a helical segment. Over 14 to 26 (LMEKLSSNTVDAQ) the chain is Mitochondrial matrix. Residues 27–54 (EVELIWTILPAIVLILLALPSLQILYMM) traverse the membrane as a helical segment. Residues 55 to 198 (DEIDEPDLTL…WSSLLSTSSL (144 aa)) are Mitochondrial intermembrane-facing. Cu cation-binding residues include His-128, Cys-163, Glu-165, Cys-167, His-171, and Met-174. Glu-165 is a Mg(2+) binding site.

This sequence belongs to the cytochrome c oxidase subunit 2 family. Component of the cytochrome c oxidase (complex IV, CIV), a multisubunit enzyme composed of 14 subunits. The complex is composed of a catalytic core of 3 subunits MT-CO1, MT-CO2 and MT-CO3, encoded in the mitochondrial DNA, and 11 supernumerary subunits COX4I, COX5A, COX5B, COX6A, COX6B, COX6C, COX7A, COX7B, COX7C, COX8 and NDUFA4, which are encoded in the nuclear genome. The complex exists as a monomer or a dimer and forms supercomplexes (SCs) in the inner mitochondrial membrane with NADH-ubiquinone oxidoreductase (complex I, CI) and ubiquinol-cytochrome c oxidoreductase (cytochrome b-c1 complex, complex III, CIII), resulting in different assemblies (supercomplex SCI(1)III(2)IV(1) and megacomplex MCI(2)III(2)IV(2)). Found in a complex with TMEM177, COA6, COX18, COX20, SCO1 and SCO2. Interacts with TMEM177 in a COX20-dependent manner. Interacts with COX20. Interacts with COX16. Cu cation serves as cofactor.

The protein resides in the mitochondrion inner membrane. The catalysed reaction is 4 Fe(II)-[cytochrome c] + O2 + 8 H(+)(in) = 4 Fe(III)-[cytochrome c] + 2 H2O + 4 H(+)(out). Functionally, component of the cytochrome c oxidase, the last enzyme in the mitochondrial electron transport chain which drives oxidative phosphorylation. The respiratory chain contains 3 multisubunit complexes succinate dehydrogenase (complex II, CII), ubiquinol-cytochrome c oxidoreductase (cytochrome b-c1 complex, complex III, CIII) and cytochrome c oxidase (complex IV, CIV), that cooperate to transfer electrons derived from NADH and succinate to molecular oxygen, creating an electrochemical gradient over the inner membrane that drives transmembrane transport and the ATP synthase. Cytochrome c oxidase is the component of the respiratory chain that catalyzes the reduction of oxygen to water. Electrons originating from reduced cytochrome c in the intermembrane space (IMS) are transferred via the dinuclear copper A center (CU(A)) of subunit 2 and heme A of subunit 1 to the active site in subunit 1, a binuclear center (BNC) formed by heme A3 and copper B (CU(B)). The BNC reduces molecular oxygen to 2 water molecules using 4 electrons from cytochrome c in the IMS and 4 protons from the mitochondrial matrix. The polypeptide is Cytochrome c oxidase subunit 2 (MT-CO2) (Tinamus major (Great tinamou)).